The chain runs to 337 residues: Probable E3 ubiquitin-protein ligase LUL1 (337 aa).

G2 is lipidated: N-myristoyl glycine. Residues 139-255 (FTFDASMPGR…GEIKIEVVKQ (117 aa)) are DAR2 domain. The segment at 285–324 (CVVCLSEPRDTTVLPCRHMCMCSGCAKALRFQTNLCPVCR) adopts an RING-type; atypical zinc-finger fold.

It belongs to the RING-type zinc finger family. LOG2 subfamily. In terms of processing, myristoylated (in vitro).

It catalyses the reaction S-ubiquitinyl-[E2 ubiquitin-conjugating enzyme]-L-cysteine + [acceptor protein]-L-lysine = [E2 ubiquitin-conjugating enzyme]-L-cysteine + N(6)-ubiquitinyl-[acceptor protein]-L-lysine.. It participates in protein modification; protein ubiquitination. Functionally, acts as an E3 ubiquitin-protein ligase, or as part of E3 complex, which accepts ubiquitin from specific E2 ubiquitin-conjugating enzymes and then transfers it to substrates (in vitro). This is Probable E3 ubiquitin-protein ligase LUL1 (LUL1) from Arabidopsis thaliana (Mouse-ear cress).